Consider the following 282-residue polypeptide: Bifunctional protein FolD (282 aa).

NADP(+) is bound by residues 165–167, S190, and T231; that span reads GRS.

This sequence belongs to the tetrahydrofolate dehydrogenase/cyclohydrolase family. Homodimer.

It carries out the reaction (6R)-5,10-methylene-5,6,7,8-tetrahydrofolate + NADP(+) = (6R)-5,10-methenyltetrahydrofolate + NADPH. It catalyses the reaction (6R)-5,10-methenyltetrahydrofolate + H2O = (6R)-10-formyltetrahydrofolate + H(+). It participates in one-carbon metabolism; tetrahydrofolate interconversion. Its function is as follows. Catalyzes the oxidation of 5,10-methylenetetrahydrofolate to 5,10-methenyltetrahydrofolate and then the hydrolysis of 5,10-methenyltetrahydrofolate to 10-formyltetrahydrofolate. The sequence is that of Bifunctional protein FolD from Clostridium botulinum (strain Eklund 17B / Type B).